Here is a 295-residue protein sequence, read N- to C-terminus: 4-diphosphocytidyl-2-C-methyl-D-erythritol kinase (295 aa).

Residue lysine 18 is part of the active site. 101–111 provides a ligand contact to ATP; it reads PMGGGIGGGSS. Residue aspartate 143 is part of the active site.

This sequence belongs to the GHMP kinase family. IspE subfamily.

It carries out the reaction 4-CDP-2-C-methyl-D-erythritol + ATP = 4-CDP-2-C-methyl-D-erythritol 2-phosphate + ADP + H(+). It functions in the pathway isoprenoid biosynthesis; isopentenyl diphosphate biosynthesis via DXP pathway; isopentenyl diphosphate from 1-deoxy-D-xylulose 5-phosphate: step 3/6. Functionally, catalyzes the phosphorylation of the position 2 hydroxy group of 4-diphosphocytidyl-2C-methyl-D-erythritol. The protein is 4-diphosphocytidyl-2-C-methyl-D-erythritol kinase of Vibrio cholerae serotype O1 (strain ATCC 39315 / El Tor Inaba N16961).